A 72-amino-acid chain; its full sequence is Penaeidin-2a (72 aa).

Positions 1 to 21 (MRLVVCLVFLASFALVCQGEA) are cleaved as a signal peptide. 3 cysteine pairs are disulfide-bonded: Cys45–Cys59, Cys48–Cys66, and Cys60–Cys67. Lys71 bears the Lysine amide mark.

Higher expression in hemocytes and to a lesser extent in heart, testis, gills, intestine, lymphoid organ and hepatopancreas. Traces in eyes and subcuticular epithelium. Not present in the brain.

It localises to the cytoplasmic granule. In terms of biological role, antibacterial activity against M.luteus and E.coli bacteria. Antifungal activity against N.crassa and F.oxysporum. Presents chitin-binding activity. In Penaeus vannamei (Whiteleg shrimp), this protein is Penaeidin-2a.